The following is a 268-amino-acid chain: MERYESLFAQLKERKEGAFVPFVTLGDPGIEQSLKIIDTLIEAGADALELGIPFSDPLADGPTIQNATLRAFAAGVTPAQCFEMLALIRQKHPTIPIGLLMYANLVFNKGIDEFYAQCEKVGVDSVLVADVPIEESAPFRQAALRHNVAPIFICPPNADDDLLRQIASYGRGYTYLLSRAGVTGAENRAALPLNHLVAKLKEYNAAPPLQGFGISAPDQVKAPIDAGAAGAISGSAIVKIIEQHINEPEKMLAALKVFVQPMKAATRS.

Residues glutamate 49 and aspartate 60 each act as proton acceptor in the active site.

It belongs to the TrpA family. Tetramer of two alpha and two beta chains.

The enzyme catalyses (1S,2R)-1-C-(indol-3-yl)glycerol 3-phosphate + L-serine = D-glyceraldehyde 3-phosphate + L-tryptophan + H2O. It participates in amino-acid biosynthesis; L-tryptophan biosynthesis; L-tryptophan from chorismate: step 5/5. Its function is as follows. The alpha subunit is responsible for the aldol cleavage of indoleglycerol phosphate to indole and glyceraldehyde 3-phosphate. The sequence is that of Tryptophan synthase alpha chain from Escherichia coli O139:H28 (strain E24377A / ETEC).